The chain runs to 129 residues: Large ribosomal subunit protein uL14m (129 aa).

It belongs to the universal ribosomal protein uL14 family. As to quaternary structure, component of the mitochondrial ribosome large subunit (39S) which comprises a 16S rRNA and about 50 distinct proteins.

It is found in the mitochondrion. This is Large ribosomal subunit protein uL14m (mrpl14) from Dictyostelium discoideum (Social amoeba).